The chain runs to 1110 residues: Ribosome assembly protein 1 (1110 aa).

Residues 17-262 (SCIRNICIVA…QKLGAKRENL (246 aa)) enclose the tr-type G domain. GTP is bound by residues 26-33 (AHVDHGKT), 102-106 (DSPGH), and 156-159 (NKID). Residue S431 is modified to Phosphoserine.

It belongs to the TRAFAC class translation factor GTPase superfamily. Classic translation factor GTPase family.

Its subcellular location is the cytoplasm. The enzyme catalyses GTP + H2O = GDP + phosphate + H(+). With respect to regulation, GTPase activity is stimulated in the presence of 60S subunits. Functionally, GTPase involved in the biogenesis of the 60S ribosomal subunit and translational activation of ribosomes. Together with SDO1, may trigger the GTP-dependent release of TIF6 from 60S pre-ribosomes in the cytoplasm, thereby activating ribosomes for translation competence by allowing 80S ribosome assembly and facilitating TIF6 recycling to the nucleus, where it is required for 60S rRNA processing and nuclear export. Inhibits GTPase activity of ribosome-bound EF-2. The polypeptide is Ribosome assembly protein 1 (RIA1) (Saccharomyces cerevisiae (strain ATCC 204508 / S288c) (Baker's yeast)).